The sequence spans 346 residues: N-acetyl-gamma-glutamyl-phosphate reductase (346 aa).

The active site involves cysteine 149.

Belongs to the NAGSA dehydrogenase family. Type 1 subfamily.

It localises to the cytoplasm. It catalyses the reaction N-acetyl-L-glutamate 5-semialdehyde + phosphate + NADP(+) = N-acetyl-L-glutamyl 5-phosphate + NADPH + H(+). Its pathway is amino-acid biosynthesis; L-arginine biosynthesis; N(2)-acetyl-L-ornithine from L-glutamate: step 3/4. Functionally, catalyzes the NADPH-dependent reduction of N-acetyl-5-glutamyl phosphate to yield N-acetyl-L-glutamate 5-semialdehyde. The sequence is that of N-acetyl-gamma-glutamyl-phosphate reductase from Geobacter sp. (strain M21).